A 243-amino-acid polypeptide reads, in one-letter code: Small ribosomal subunit protein uS3 (243 aa).

The KH type-2 domain occupies I39–E110. A disordered region spans residues Q216–S243. The span at Q233 to S243 shows a compositional bias: basic and acidic residues.

Belongs to the universal ribosomal protein uS3 family. Part of the 30S ribosomal subunit. Forms a tight complex with proteins S10 and S14.

Functionally, binds the lower part of the 30S subunit head. Binds mRNA in the 70S ribosome, positioning it for translation. The polypeptide is Small ribosomal subunit protein uS3 (Prochlorococcus marinus (strain MIT 9215)).